Reading from the N-terminus, the 366-residue chain is Ribosomal RNA large subunit methyltransferase M (366 aa).

S-adenosyl-L-methionine contacts are provided by residues Ser187, 220 to 223 (SPGG), Asp239, Asp259, and Asp276. Residue Lys305 is the Proton acceptor of the active site.

This sequence belongs to the class I-like SAM-binding methyltransferase superfamily. RNA methyltransferase RlmE family. RlmM subfamily. In terms of assembly, monomer.

It localises to the cytoplasm. It carries out the reaction cytidine(2498) in 23S rRNA + S-adenosyl-L-methionine = 2'-O-methylcytidine(2498) in 23S rRNA + S-adenosyl-L-homocysteine + H(+). Its function is as follows. Catalyzes the 2'-O-methylation at nucleotide C2498 in 23S rRNA. This is Ribosomal RNA large subunit methyltransferase M from Tolumonas auensis (strain DSM 9187 / NBRC 110442 / TA 4).